Reading from the N-terminus, the 472-residue chain is Glutamate-1-semialdehyde 2,1-aminomutase 2, chloroplastic (472 aa).

A chloroplast-targeting transit peptide spans 1–36; that stretch reads MAATLTGSGIALGFSCSAKFSKRASSSSNRRCIKMS. The residue at position 312 (Lys312) is an N6-(pyridoxal phosphate)lysine.

This sequence belongs to the class-III pyridoxal-phosphate-dependent aminotransferase family. HemL subfamily. As to quaternary structure, homodimer. Pyridoxal 5'-phosphate serves as cofactor. Expressed in leaf primordia and shoot apical meristems (SAM).

The protein localises to the plastid. Its subcellular location is the chloroplast. The enzyme catalyses (S)-4-amino-5-oxopentanoate = 5-aminolevulinate. It participates in porphyrin-containing compound metabolism; protoporphyrin-IX biosynthesis; 5-aminolevulinate from L-glutamyl-tRNA(Glu): step 2/2. The protein operates within porphyrin-containing compound metabolism; chlorophyll biosynthesis. Its function is as follows. Transaminase converting glutamate 1-semialdehyde (GSA) to 5-aminolevulinate (ALA). Involved in the biosynthesis of tetrapyrroles. This is Glutamate-1-semialdehyde 2,1-aminomutase 2, chloroplastic from Arabidopsis thaliana (Mouse-ear cress).